A 517-amino-acid polypeptide reads, in one-letter code: Acetylcholine receptor subunit delta (517 aa).

The first 21 residues, 1 to 21 (MAGPVPTLGLLAALVVCGSWG), serve as a signal peptide directing secretion. At 22 to 245 (LNEEQRLIQH…VTFYLIIRRK (224 aa)) the chain is on the extracellular side. Asparagine 97, asparagine 164, and asparagine 190 each carry an N-linked (GlcNAc...) asparagine glycan. A disulfide bond links cysteine 151 and cysteine 165. The next 3 helical transmembrane spans lie at 246 to 270 (PLFY…VFYL), 278 to 296 (TSVA…LLIS), and 312 to 333 (FLLF…VLNI). Residues 334–471 (HFRTPSTHVL…WNQVARTVDR (138 aa)) are Cytoplasmic-facing. At tyrosine 390 the chain carries Phosphotyrosine; by Tyr-kinases. The chain crosses the membrane as a helical span at residues 472-490 (LCLFVVTPVMVVGTAWIFL).

The protein belongs to the ligand-gated ion channel (TC 1.A.9) family. Acetylcholine receptor (TC 1.A.9.1) subfamily. Delta/CHRND sub-subfamily. Pentamer of two alpha chains, and one each of the beta, delta, and gamma (in immature muscle) or epsilon (in mature muscle) chains. The muscle heteropentamer composed of alpha-1, beta-1, delta, epsilon subunits interacts with the alpha-conotoxin ImII.

The protein resides in the postsynaptic cell membrane. It localises to the cell membrane. The enzyme catalyses K(+)(in) = K(+)(out). The catalysed reaction is Na(+)(in) = Na(+)(out). After binding acetylcholine, the AChR responds by an extensive change in conformation that affects all subunits and leads to opening of an ion-conducting channel across the plasma membrane. In Rattus norvegicus (Rat), this protein is Acetylcholine receptor subunit delta (Chrnd).